Reading from the N-terminus, the 167-residue chain is MKWCKRGYVLAAILALASATIQAADVTITVNGKVVAKPCTVSTTNATVDLGDLYSFSLMSAGAASAWHDVALELTNCPVGTSRVTASFSGAADSTGYYKNQGTAQNIQLELQDDSGNTLNTGATKTVQVDDSSQSAHFPLQVRALTVNGGATQGTIQAVISITYTYS.

Positions 1–23 (MKWCKRGYVLAAILALASATIQA) are cleaved as a signal peptide. An intrachain disulfide couples cysteine 39 to cysteine 77.

The protein belongs to the fimbrial protein family.

The protein localises to the fimbrium. Its function is as follows. Involved in regulation of length and mediation of adhesion of type 1 fimbriae (but not necessary for the production of fimbriae). Involved in the integration of FimH in the fimbriae. The polypeptide is Protein FimG (fimG) (Escherichia coli (strain K12)).